The chain runs to 416 residues: Carboxypeptidase B (416 aa).

The signal sequence occupies residues 1-15 (MAFLILVTLALASAH). A propeptide spans 16-109 (YSGEHFEGEK…LEGQFGRQVP (94 aa)) (activation peptide). The Peptidase M14 domain maps to 117–411 (KYNRWETIEA…LAIKHLARYV (295 aa)). Residues H175 and E178 each contribute to the Zn(2+) site. Substrate is bound by residues 175 to 178 (HARE), R233, and 250 to 251 (TR). 2 disulfide bridges follow: C244-C267 and C258-C272. H303 is a binding site for Zn(2+). Substrate-binding positions include 304–305 (SY) and Y355. Residue E377 is the Proton donor/acceptor of the active site.

This sequence belongs to the peptidase M14 family. The cofactor is Zn(2+).

Its subcellular location is the secreted. The protein resides in the zymogen granule lumen. It catalyses the reaction Preferential release of a C-terminal lysine or arginine amino acid.. In Canis lupus familiaris (Dog), this protein is Carboxypeptidase B (CPB1).